A 600-amino-acid polypeptide reads, in one-letter code: UPF0588 membrane protein C20F10.02c (600 aa).

The next 2 helical transmembrane spans lie at 409 to 429 (LSAT…TSLV) and 437 to 457 (YHWL…SVLI).

The protein belongs to the UPF0588 family.

Its subcellular location is the membrane. The polypeptide is UPF0588 membrane protein C20F10.02c (Schizosaccharomyces pombe (strain 972 / ATCC 24843) (Fission yeast)).